A 402-amino-acid polypeptide reads, in one-letter code: MESKDWVAGISKSDAGRYSRQLLVDDFGVSGQKNLKNTAVLIVGAGGLGCPVATYLGAAGVGTLGIVDYDRISLDNLHRQVAYKEDQVGQSKSQGLADNVKLQNSGVTTVVHNVSLDSSNAMEIFKNYDIVCDCTDNVATRYLINDVCVLLNIPLVSGSALRWDGQLSVYHYGPDCPCYRCLFPSPPDPSSVTNCNEGGVLGPIVGTIGSMQALEVMKIAAKLSTTLAGKLLLFDGREGKSRTIRLRKRDPKCAVCGDEPSITAPIDYMLFCGAGAHDKIENLKLLEPSVRVNVHEYQEIRSAARKQFLLDTRPPVEFEIAHLPEAIDITLNECRSLQAEELSSRLGVDSQTSDVYVICHRGNDSQRAVKLLKEKLGSIHFRDIIGGYEEWALKINDEFPLY.

Residues Gly47, Asp68, 75-79 (DNLHR), Lys92, and 136-137 (DN) contribute to the ATP site. Zn(2+)-binding residues include Cys178 and Cys181. Cys195 serves as the catalytic Glycyl thioester intermediate; for adenylyltransferase activity. Zn(2+) is bound by residues Cys253 and Cys256. A Rhodanese domain is found at 303–400 (AARKQFLLDT…WALKINDEFP (98 aa)). Cys359 acts as the Cysteine persulfide intermediate; for sulfurtransferase activity in catalysis.

It in the N-terminal section; belongs to the HesA/MoeB/ThiF family. UBA4 subfamily. Requires Zn(2+) as cofactor.

The protein localises to the cytoplasm. It localises to the cytosol. The catalysed reaction is [molybdopterin-synthase sulfur-carrier protein]-C-terminal Gly-Gly + ATP + H(+) = [molybdopterin-synthase sulfur-carrier protein]-C-terminal Gly-Gly-AMP + diphosphate. It carries out the reaction [molybdopterin-synthase sulfur-carrier protein]-C-terminal Gly-Gly-AMP + S-sulfanyl-L-cysteinyl-[cysteine desulfurase] + AH2 = [molybdopterin-synthase sulfur-carrier protein]-C-terminal-Gly-aminoethanethioate + L-cysteinyl-[cysteine desulfurase] + A + AMP + 2 H(+). It functions in the pathway tRNA modification; 5-methoxycarbonylmethyl-2-thiouridine-tRNA biosynthesis. The protein operates within cofactor biosynthesis; molybdopterin biosynthesis. Plays a central role in 2-thiolation of mcm(5)S(2)U at tRNA wobble positions of cytosolic tRNA(Lys), tRNA(Glu) and tRNA(Gln). Also essential during biosynthesis of the molybdenum cofactor. Acts by mediating the C-terminal thiocarboxylation of sulfur carriers URM1 and MOCS2A. Its N-terminus first activates URM1 and MOCS2A as acyl-adenylates (-COAMP), then the persulfide sulfur on the catalytic cysteine is transferred to URM1 and MOCS2A to form thiocarboxylation (-COSH) of their C-terminus. The reaction probably involves hydrogen sulfide that is generated from the persulfide intermediate and that acts as a nucleophile towards URM1 and MOCS2A. Subsequently, a transient disulfide bond is formed. Does not use thiosulfate as sulfur donor; NFS1 probably acting as a sulfur donor for thiocarboxylation reactions. In Caenorhabditis briggsae, this protein is Adenylyltransferase and sulfurtransferase MOCS3.